We begin with the raw amino-acid sequence, 515 residues long: Acetyltransferase sphE (515 aa).

Catalysis depends on proton acceptor residues His184 and Asp438.

The protein belongs to the plant acyltransferase family. In terms of assembly, monomer.

The catalysed reaction is sphingofungin B + acetyl-CoA = sphingofungin C + CoA. It participates in secondary metabolite biosynthesis. Its function is as follows. Acetyltransferase; part of the gene cluster that mediates the biosynthesis of sphingofungins, bioactive molecules acting as sphingolipid inhibitors via inhibiting serine palmitoyl transferase (SPT). Within the pathway, sphE catalyzes the O-acetylation of the C-5 hydroxyl group of sphingofungin B to produce sphingofungin C. SphE can also convert sphingofungin B1 into sphingofungin C1 and sphingofungin B2 into sphingofungin C2. Sphingofungin biosynthesis starts with the PKS sphB that produces an C18 polyketide precursor 3-hydroxyoctadeca-4,10-dienoyl-ACP containing one delta-6 desaturation and one delta-12 desaturation. The aminoacyl transferase sphA uses the sphB product to produce 3-keto-presphingofungin by adding an aminomalonate molecule. SphF then reduces the C-3 ketone of 3-keto-presphingofungin which leads to presphingofungin. The cytochrome P450 monooxygenase sphH converts presphingofungin into sphingofungin B1 which is further converted to sphingofungin B by the dioxygenase sphC. SphC is also able to convert presphingofungin into sphingofungin B2. The acetyltransferase sphE acetylates sphingofungin B to produce sphingofungin C, but can also convert sphingofungin B1 into sphingofungin C1 and sphingofungin B2 into sphingofungin C2. Finally, sphingofungin C can be spontaneously converted into sphingofungin D. In Aspergillus fumigatus (strain CBS 144.89 / FGSC A1163 / CEA10) (Neosartorya fumigata), this protein is Acetyltransferase sphE.